The chain runs to 377 residues: Glutamate 5-kinase (377 aa).

Lysine 22 is an ATP binding site. 3 residues coordinate substrate: serine 62, aspartate 149, and asparagine 161. ATP is bound by residues 181 to 182 and 223 to 229; these read TD and TGGMVTK. Residues 285–363 enclose the PUA domain; that stretch reads RGVLVADSGA…AQLRRLLGEE (79 aa).

It belongs to the glutamate 5-kinase family.

Its subcellular location is the cytoplasm. The catalysed reaction is L-glutamate + ATP = L-glutamyl 5-phosphate + ADP. Its pathway is amino-acid biosynthesis; L-proline biosynthesis; L-glutamate 5-semialdehyde from L-glutamate: step 1/2. Functionally, catalyzes the transfer of a phosphate group to glutamate to form L-glutamate 5-phosphate. The protein is Glutamate 5-kinase of Bifidobacterium animalis subsp. lactis (strain AD011).